Here is a 134-residue protein sequence, read N- to C-terminus: MGPRRKPQTPRRRPSSPAPGPSRQSSSVGSQTLRRRQKFMWLKEIKTLQKSTDLLFRKKPFSMVVREICEKFSRGVDFWWQAQALLALQEAAEAFLIHLFEDAYLLSLHAGRVTLFPKDIQLTRRIRGFEGGLP.

Residues methionine 1 to proline 14 are compositionally biased toward basic residues. The interval methionine 1–arginine 34 is disordered. Residue glycine 2 is modified to N,N,N-trimethylglycine. 2 positions are modified to phosphoserine: serine 16 and serine 22. An important for flexibility of DNA ends that protrude from nucleosomes region spans residues arginine 34–leucine 48. The segment at arginine 35 to proline 134 is H3-like. Serine 62 is subject to Phosphoserine. Residues cysteine 69–alanine 110 are CATD.

The protein belongs to the histone H3 family. Component of centromeric nucleosomes, where DNA is wrapped around a histone octamer core. The octamer contains two molecules each of H2A, H2B, CENPA and H4 assembled in one CENPA-H4 heterotetramer and two H2A-H2B heterodimers. CENPA modulates the DNA-binding characteristics of nucleosomes so that protruding DNA ends have higher flexibility than in nucleosomes containing conventional histone H3. Inhibits binding of histone H1 to nucleosomes, since histone H1 binds preferentially to rigid DNA linkers that protrude from nucleosomes. Nucleosomes containing CENPA also contain histone H2A variants such as MACROH2A and H2A.Z/H2AZ1. The CENPA-H4 heterotetramer is more compact and structurally more rigid than corresponding H3-H4 heterotetramers. Can assemble into nucleosomes that contain both CENPA and histone H3.3; these nucleosomes interact with a single CENPC chain. Heterotrimer composed of HJURP, CENPA and histone H4, where HJURP interacts with the dimer formed by CENPA and histone H4 and prevents tetramerization of CENPA and H4. Component of the CENPA-NAC complex, at least composed of CENPA, CENPC, CENPH, CENPM, CENPN, CENPT and CENPU. Interacts (via CATD domain) with HJURP; the interaction is direct and is required for its localization to centromeres. Interacts with CENPC, CENPN and CENPT; interaction is direct. Part of a centromere complex consisting of CENPA, CENPT and CENPW. Identified in centromere complexes containing histones H2A, H2B and H4, and at least CENPA, CENPB, CENPC, CENPT, CENPN, HJURP, SUPT16H, SSRP1 and RSF1. Can self-associate. The CENPA-H4 heterotetramer can bind DNA by itself (in vitro). Interacts with CDK1, PPP1CA and RBBP7. In terms of processing, poly-ADP-ribosylated by PARP1. Trimethylated by NTMT1 at the N-terminal glycine after cleavage of Met-1. Methylation is low before incorporation into nucleosomes and increases with cell cycle progression, with the highest levels in mitotic nucleosomes. Post-translationally, phosphorylated by CDK1 at Ser-62 during early mitosis; this abolishes association with chromatin and centromeres, prevents interaction with HJURP and thereby prevents premature assembly of CENPA into centromeres. Dephosphorylated at Ser-62 by PPP1CA during late mitosis.

It is found in the nucleus. The protein resides in the chromosome. It localises to the centromere. Its function is as follows. Histone H3-like nucleosomal protein that is specifically found in centromeric nucleosomes. Replaces conventional H3 in the nucleosome core of centromeric chromatin that serves as an assembly site for the inner kinetochore. The presence of CENPA subtly modifies the nucleosome structure and the way DNA is wrapped around the nucleosome and gives rise to protruding DNA ends that are less well-ordered and rigid compared to nucleosomes containing histone H3. May serve as an epigenetic mark that propagates centromere identity through replication and cell division. Required for recruitment and assembly of kinetochore proteins, and as a consequence required for progress through mitosis, chromosome segregation and cytokinesis. In Mus musculus (Mouse), this protein is Histone H3-like centromeric protein A (Cenpa).